The sequence spans 1218 residues: Coatomer subunit alpha-3 (1218 aa).

WD repeat units lie at residues 7–48 (TKSN…DRFD), 49–88 (EHDGPVRGVHFHATQPLFVSGGDDYKIKVWNYKTHRCLFT), 91–132 (GHLD…AVLT), 133–172 (GHNHYVMCASFHPKEDLVVSASLDQTVRVWDIGALRKKTV), 202–241 (GHDRGVNWASFHPTLPLIVSGADDRQVKLWRMNDTKAWEV), 246–285 (GHMNNVSCVMFHAKQDIIVSNSEDKSIRVWDATKRTGIQT), 288–326 (REHDRFWILAAHPEMNLLAAGHDNGMIVFKLERERPAFS), 363–404 (SLNQ…AGRT), and 450–489 (PLPIAMDAIYYAGTGNLLCKAEDRVTIFDLQQRLILGELQ). Positions 854 to 893 (AMANGGDGFDAEEGEANEEDGEEGGWDLEDLELPPEAETP) are disordered. Acidic residues predominate over residues 862-888 (FDAEEGEANEEDGEEGGWDLEDLELPP).

Oligomeric complex that consists of at least the alpha, beta, beta', gamma, delta, epsilon and zeta subunits.

It localises to the cytoplasm. The protein localises to the golgi apparatus membrane. It is found in the cytoplasmic vesicle. The protein resides in the COPI-coated vesicle membrane. The coatomer is a cytosolic protein complex that binds to dilysine motifs and reversibly associates with Golgi non-clathrin-coated vesicles, which further mediate biosynthetic protein transport from the ER, via the Golgi up to the trans Golgi network. Coatomer complex is required for budding from Golgi membranes, and is essential for the retrograde Golgi-to-ER transport of dilysine-tagged proteins. The polypeptide is Coatomer subunit alpha-3 (Oryza sativa subsp. japonica (Rice)).